The chain runs to 308 residues: Phenylcoumaran benzylic ether reductase 1 (308 aa).

NADP(+) is bound by residues Gly11–Gly17, Arg36, and Arg45. The active-site Proton acceptor is the Lys133. Arg137 provides a ligand contact to NADP(+).

Belongs to the NmrA-type oxidoreductase family. Isoflavone reductase subfamily. Expressed in apical meristem and cotyledon veins of young seedlings. Expressed in vascular tissues of roots, leaves, stems and petals. Expressed in pollen grains. Expressed at low levels in cauline leaves and siliques.

The catalysed reaction is (-)-dehydrodiconiferyl alcohol + NADPH + H(+) = (S)-isodihydrodehydrodiconiferyl alcohol + NADP(+). The enzyme catalyses (+)-dehydrodiconiferyl alcohol + NADPH + H(+) = (R)-isodihydrodehydrodiconiferyl alcohol + NADP(+). It catalyses the reaction (2R,3S)-dihydrodehydrodiconiferyl alcohol + NADPH + H(+) = (S)-tetrahydrodehydrodiconiferyl alcohol + NADP(+). It carries out the reaction (2S,3R)-dihydrodehydrodiconiferyl alcohol + NADPH + H(+) = (R)-tetrahydrodehydrodiconiferyl alcohol + NADP(+). Functionally, oxidoreductase involved in lignan biosynthesis. Catalyzes the NADPH-dependent reduction of phenylcoumaran benzylic ethers. Converts dehydrodiconiferyl alcohol (DDC) to isodihydrodehydrodiconiferyl alcohol (IDDDC), and dihydrodehydrodiconiferyl alcohol (DDDC) to tetrahydrodehydrodiconiferyl alcohol (TDDC). Plays an important role in the biosynthesis of secondary metabolites. In addition to the 8-5'-linked neolignan DDC, can reduce the 8-8'-linked lignans, pinoresinol, and lariciresinol, but with lower activities. The polypeptide is Phenylcoumaran benzylic ether reductase 1 (Arabidopsis thaliana (Mouse-ear cress)).